The sequence spans 347 residues: Photosystem II protein D1 (347 aa).

Helical transmembrane passes span 32-49 (YIGW…LATV), 121-136 (HFIL…EWEF), and 145-159 (WIFV…AASA). Position 121 (His121) interacts with chlorophyll a. Residue Tyr129 coordinates pheophytin a. Residues Asp173 and Glu192 each contribute to the [CaMn4O5] cluster site. A helical membrane pass occupies residues 200–221 (FHILGVAAVFGGSLFSAMHGSL). His201 serves as a coordination point for chlorophyll a. A quinone-binding positions include His218 and 267-268 (SF). His218 lines the Fe cation pocket. His275 contacts Fe cation. Residues 277–291 (FLAAWPVIGIWFTAL) traverse the membrane as a helical segment. [CaMn4O5] cluster-binding residues include His335, Glu336, Asp345, and Ala347.

The protein belongs to the reaction center PufL/M/PsbA/D family. PSII is composed of 1 copy each of membrane proteins PsbA, PsbB, PsbC, PsbD, PsbE, PsbF, PsbH, PsbI, PsbJ, PsbK, PsbL, PsbM, PsbT, PsbX, PsbY, PsbZ, Psb30/Ycf12, at least 3 peripheral proteins of the oxygen-evolving complex and a large number of cofactors. It forms dimeric complexes. Requires The D1/D2 heterodimer binds P680, chlorophylls that are the primary electron donor of PSII, and subsequent electron acceptors. It shares a non-heme iron and each subunit binds pheophytin, quinone, additional chlorophylls, carotenoids and lipids. D1 provides most of the ligands for the Mn4-Ca-O5 cluster of the oxygen-evolving complex (OEC). There is also a Cl(-1) ion associated with D1 and D2, which is required for oxygen evolution. The PSII complex binds additional chlorophylls, carotenoids and specific lipids. as cofactor. Tyr-164 forms a radical intermediate that is referred to as redox-active TyrZ, YZ or Y-Z.

It is found in the plastid. Its subcellular location is the chloroplast thylakoid membrane. It carries out the reaction 2 a plastoquinone + 4 hnu + 2 H2O = 2 a plastoquinol + O2. Functionally, photosystem II (PSII) is a light-driven water:plastoquinone oxidoreductase that uses light energy to abstract electrons from H(2)O, generating O(2) and a proton gradient subsequently used for ATP formation. It consists of a core antenna complex that captures photons, and an electron transfer chain that converts photonic excitation into a charge separation. The D1/D2 (PsbA/PsbD) reaction center heterodimer binds P680, the primary electron donor of PSII as well as several subsequent electron acceptors. This Heterocapsa niei (Dinoflagellate) protein is Photosystem II protein D1.